We begin with the raw amino-acid sequence, 388 residues long: 3beta-hydroxysteroid dehydrogenase dhs-16 (388 aa).

The helical transmembrane segment at 2–22 threads the bilayer; that stretch reads LELIYILPLLCFVYFLFRRFV. Catalysis depends on Y188, which acts as the Proton acceptor. Helical transmembrane passes span 300 to 320 and 346 to 366; these read AIFM…WILA and IQWI…TIFF.

This sequence belongs to the short-chain dehydrogenases/reductases (SDR) family. As to expression, strongly expressed in the hypodermis and posterior pharyngeal bulb and in a number of unidentified neurons of the head and tail.

Its subcellular location is the membrane. The enzyme catalyses lathosterol + NAD(+) = 5alpha-cholest-7-en-3-one + NADH + H(+). It functions in the pathway steroid hormone biosynthesis; dafachronic acid biosynthesis. Functionally, 3beta-hydroxysteroid dehydrogenase that converts 3beta-hydroxysteroids to 3-ketosteroids, an essential step in the production of dafachronic acids from cholesterol. Catalyzes the dehydrogenation of lathosterol (5alpha-cholest-7-en-3beta-ol) to lathosterone (5alpha-cholest-7-en-3-one), a step required for maximal biosynthesis of Delta(7)-dafachronic acid. Dafachronic acids act as ligands and bind directly to the nuclear hormone receptor (NHR) daf-12, suppressing dauer formation and inducing reproductive growth, they can also regulate C.elegans lifespan. This Caenorhabditis elegans protein is 3beta-hydroxysteroid dehydrogenase dhs-16 (dhs-16).